The primary structure comprises 189 residues: HTH-type transcriptional regulator Hpr (189 aa).

One can recognise an HTH marR-type domain in the interval 12 to 156 (ALLYSHKIVQ…ISAIVRRLYG (145 aa)). The segment at residues 62 to 85 (ISEIAKYGVMHVSTAFNFSKKLED) is a DNA-binding region (H-T-H motif).

Homodimer.

In terms of biological role, negative regulator of protease production and sporulation. The polypeptide is HTH-type transcriptional regulator Hpr (Exiguobacterium sibiricum (strain DSM 17290 / CCUG 55495 / CIP 109462 / JCM 13490 / 255-15)).